Consider the following 182-residue polypeptide: Ribosome maturation factor RimM (182 aa).

A PRC barrel domain is found at 103-182 (EDEFYWRELF…RIEVDWDPGF (80 aa)).

This sequence belongs to the RimM family. Binds ribosomal protein uS19.

Its subcellular location is the cytoplasm. Its function is as follows. An accessory protein needed during the final step in the assembly of 30S ribosomal subunit, possibly for assembly of the head region. Essential for efficient processing of 16S rRNA. May be needed both before and after RbfA during the maturation of 16S rRNA. It has affinity for free ribosomal 30S subunits but not for 70S ribosomes. This is Ribosome maturation factor RimM from Vibrio parahaemolyticus serotype O3:K6 (strain RIMD 2210633).